Consider the following 197-residue polypeptide: Cold-regulated 413 plasma membrane protein 1 (197 aa).

Over 1-40 (MPMKSLRNDHGTLKAMIGSDFNELTIAAKNLATHAFTLTG) the chain is Extracellular. Residues 41–61 (LGFGTSVLEWVASIAAIYLLV) traverse the membrane as a helical segment. The Cytoplasmic segment spans residues 62 to 71 (LDRTNWKTNM). A helical membrane pass occupies residues 72 to 92 (LTSLLIPYIFFSLPSLIFGIF). Over 93–94 (RG) the chain is Extracellular. Residues 95 to 115 (EIGKWIAFVAVVVQLFFPKHA) traverse the membrane as a helical segment. Residues 116–117 (RE) are Cytoplasmic-facing. The helical transmembrane segment at 118–138 (YLELPVALVLLAVVAPNLIAG) threads the bilayer. Over 139–141 (TFR) the chain is Extracellular. Residues 142 to 162 (DSWIGLAICLGIGCYLLQEHI) traverse the membrane as a helical segment. Residues 163 to 176 (RASGGFRNAFTKAN) are Cytoplasmic-facing. A helical membrane pass occupies residues 177–197 (GISNTVGIICLVVFPVWALIF).

The protein belongs to the Cold-regulated 413 protein family.

It localises to the membrane. This Arabidopsis thaliana (Mouse-ear cress) protein is Cold-regulated 413 plasma membrane protein 1 (COR413PM1).